A 216-amino-acid polypeptide reads, in one-letter code: MKLVHILFVKKKSNLNSFTTVFEISLNTKYKNLFLLGNIFRQFLLGSFEGLVINEKRFYVSHTNSLYKDFYLVNEFSLLEEVLEPFYDVWTVFDNLRFKEKFSLSKRYYARLLTYGSGEINSKDIIVPSNLSLLENKSLFTLITDSLCIDVILQILSKNGSPFNGVERVNYILENSNSGNINYNKLYLDISTRYFLSPMEALFECFRKTNLALSKM.

It belongs to the RNA polymerase alpha chain family. In plastids the minimal PEP RNA polymerase catalytic core is composed of four subunits: alpha, beta, beta', and beta''. When a (nuclear-encoded) sigma factor is associated with the core the holoenzyme is formed, which can initiate transcription.

The protein resides in the plastid. The protein localises to the chloroplast. The enzyme catalyses RNA(n) + a ribonucleoside 5'-triphosphate = RNA(n+1) + diphosphate. DNA-dependent RNA polymerase catalyzes the transcription of DNA into RNA using the four ribonucleoside triphosphates as substrates. This is DNA-directed RNA polymerase subunit alpha (rpoA) from Euglena granulata.